The following is a 103-amino-acid chain: Enhancer of rudimentary homolog (103 aa).

The protein belongs to the E(R) family. As to quaternary structure, homodimer.

Its function is as follows. May have a role in the cell cycle. In Caenorhabditis elegans, this protein is Enhancer of rudimentary homolog.